The sequence spans 387 residues: 1-deoxy-D-xylulose 5-phosphate reductoisomerase (387 aa).

NADPH contacts are provided by T10, G11, S12, V13, N38, and N119. K120 is a binding site for 1-deoxy-D-xylulose 5-phosphate. Position 121 (E121) interacts with NADPH. D145 provides a ligand contact to Mn(2+). Positions 146, 147, 170, and 193 each coordinate 1-deoxy-D-xylulose 5-phosphate. Position 147 (E147) interacts with Mn(2+). G199 provides a ligand contact to NADPH. 4 residues coordinate 1-deoxy-D-xylulose 5-phosphate: S206, N211, K212, and E215. E215 serves as a coordination point for Mn(2+).

This sequence belongs to the DXR family. The cofactor is Mg(2+). Mn(2+) serves as cofactor.

It catalyses the reaction 2-C-methyl-D-erythritol 4-phosphate + NADP(+) = 1-deoxy-D-xylulose 5-phosphate + NADPH + H(+). It participates in isoprenoid biosynthesis; isopentenyl diphosphate biosynthesis via DXP pathway; isopentenyl diphosphate from 1-deoxy-D-xylulose 5-phosphate: step 1/6. Catalyzes the NADPH-dependent rearrangement and reduction of 1-deoxy-D-xylulose-5-phosphate (DXP) to 2-C-methyl-D-erythritol 4-phosphate (MEP). This Wolbachia pipientis wMel protein is 1-deoxy-D-xylulose 5-phosphate reductoisomerase.